Reading from the N-terminus, the 275-residue chain is Esterase AAEL000016 (275 aa).

Positions 1–21 (MMANETAAKSTKSSPTPAVEP) are disordered. The span at 7–16 (AAKSTKSSPT) shows a compositional bias: polar residues. Catalysis depends on charge relay system residues serine 129, aspartate 187, and histidine 214. The tract at residues 253-275 (LVDDSGPAGNGVHDDDDDDDDSD) is disordered. The span at 266 to 275 (DDDDDDDDSD) shows a compositional bias: acidic residues.

The protein belongs to the LovG family.

In Aedes aegypti (Yellowfever mosquito), this protein is Esterase AAEL000016.